The primary structure comprises 701 residues: Glycine--tRNA ligase beta subunit (701 aa).

This sequence belongs to the class-II aminoacyl-tRNA synthetase family. In terms of assembly, tetramer of two alpha and two beta subunits.

Its subcellular location is the cytoplasm. It catalyses the reaction tRNA(Gly) + glycine + ATP = glycyl-tRNA(Gly) + AMP + diphosphate. The polypeptide is Glycine--tRNA ligase beta subunit (Helicobacter pylori (strain HPAG1)).